Here is a 270-residue protein sequence, read N- to C-terminus: Probable ribosomal RNA small subunit methyltransferase A (270 aa).

The S-adenosyl-L-methionine site is built by His19, Leu21, Gly46, Glu67, Asp92, and Asn107.

Belongs to the class I-like SAM-binding methyltransferase superfamily. rRNA adenine N(6)-methyltransferase family. RsmA subfamily.

Its subcellular location is the cytoplasm. Specifically dimethylates two adjacent adenosines in the loop of a conserved hairpin near the 3'-end of 16S rRNA in the 30S particle. May play a critical role in biogenesis of 30S subunits. This chain is Probable ribosomal RNA small subunit methyltransferase A, found in Methanococcoides burtonii (strain DSM 6242 / NBRC 107633 / OCM 468 / ACE-M).